A 543-amino-acid chain; its full sequence is Glucose transporter HT1 (543 aa).

Positions 1 to 24 (MPEYPTEDTNASGKTSGSSPDDHT) are disordered. The Cytoplasmic segment spans residues 1–38 (MPEYPTEDTNASGKTSGSSPDDHTDDNAPSFFSCENLC). Residues 7-19 (EDTNASGKTSGSS) are compositionally biased toward polar residues. Residues 39–59 (IVQVPVSTGSLNGFSIGFVAV) form a helical membrane-spanning segment. Residues 60-120 (YMHLYEIFSG…GSGYNSLESG (61 aa)) lie on the Extracellular side of the membrane. Residues asparagine 90 and asparagine 91 are each glycosylated (N-linked (GlcNAc...) asparagine). Residues 121–141 (LFACSMIVGSMIGSIFAGKFL) form a helical membrane-spanning segment. Residues 142 to 147 (SKFGLK) are Cytoplasmic-facing. The helical transmembrane segment at 148-168 (MSFIVSGVLGIVGSALIHVAT) threads the bilayer. Topologically, residues 169-172 (RGST) are extracellular. A helical membrane pass occupies residues 173-193 (LWVMCVGRFLMGLVLGLVCVA). The Cytoplasmic portion of the chain corresponds to 194-212 (SPMYVNENAHPKYRKTIGV). The chain crosses the membrane as a helical span at residues 213-233 (LFQVFTTFGIMFAALLGLAIV). The Extracellular portion of the chain corresponds to 234–248 (KTPGHDKASGLLWRM). A helical transmembrane segment spans residues 249 to 269 (QVFCSVSTALSALLLVLGLVV). Residues 270–300 (RKSKTSFAGGVDSAGEGVLDPNEYSVRQMLG) lie on the Cytoplasmic side of the membrane. Residues 301–321 (PLAVGAVTAGTLQLTGINAVM) form a helical membrane-spanning segment. At 322–337 (NYAPEIMRNIGMDPME) the chain is on the extracellular side. The chain crosses the membrane as a helical span at residues 338–358 (GNSAVMSWNFVTALVAIPLVS). The Cytoplasmic portion of the chain corresponds to 359–364 (RFTMRQ). A helical membrane pass occupies residues 365–385 (LFLACSFMASCACLIMCGIPV). The Extracellular segment spans residues 386-400 (YPGVASVDNRNIVAT). The chain crosses the membrane as a helical span at residues 401-421 (VGIAVFIAAFEFGVGSCFFVL). At 422–436 (AQDLFPRSFRPTGSS) the chain is on the cytoplasmic side. The chain crosses the membrane as a helical span at residues 437-457 (FVVMAQFIFNIMINLLYPITV). Residues 458-470 (EAISGGKGKSPEK) lie on the Extracellular side of the membrane. Residues 471 to 491 (GQSVSFIIFGIIGIICFVLQL) form a helical membrane-spanning segment. The Cytoplasmic portion of the chain corresponds to 492–543 (RYLTPWEDGQGTSTSPTARCNAPTSPNNGEGEPATADMSPVEMSTPKHSGAA). The span at 503-519 (TSTSPTARCNAPTSPNN) shows a compositional bias: polar residues. Residues 503–543 (TSTSPTARCNAPTSPNNGEGEPATADMSPVEMSTPKHSGAA) form a disordered region.

The protein belongs to the major facilitator superfamily. Sugar transporter (TC 2.A.1.1) family.

Its subcellular location is the membrane. Facilitative glucose transporter. Binds D-fructose and cytochalasin-B, but not D-galactose. This Trypanosoma vivax (Duttonella vivax) protein is Glucose transporter HT1 (HT1).